We begin with the raw amino-acid sequence, 537 residues long: Hexahomomethionine N-hydroxylase (537 aa).

Residues 7 to 27 (FNTCFQILLGFIVFIASITLL) form a helical membrane-spanning segment.

This sequence belongs to the cytochrome P450 family. The cofactor is heme. As to expression, highly expressed in hypocotyl and roots. Lower expression in siliques, stems and leaves. Barely detectable in flowers. Expressed only in the vascular bundles in apical plant parts.

The protein localises to the endoplasmic reticulum membrane. The catalysed reaction is L-hexahomomethionine + 2 reduced [NADPH--hemoprotein reductase] + 2 O2 = (E)-9-(methylsulfanyl)nonanal oxime + 2 oxidized [NADPH--hemoprotein reductase] + CO2 + 3 H2O + 2 H(+). It catalyses the reaction L-pentahomomethionine + 2 reduced [NADPH--hemoprotein reductase] + 2 O2 = (E)-8-(methylsulfanyl)octanal oxime + 2 oxidized [NADPH--hemoprotein reductase] + CO2 + 3 H2O + 2 H(+). It carries out the reaction an L-polyhomomethionine + 2 reduced [NADPH--hemoprotein reductase] + 2 O2 = an (E)-omega-(methylsulfanyl)-alkanal oxime + 2 oxidized [NADPH--hemoprotein reductase] + CO2 + 3 H2O + 2 H(+). Functionally, catalyzes the conversion of the long chain elongated methionines penta- and hexahomomethionine to their corresponding aldoximes 8-methylthiooctanaldoxime and 9-methylthiononanaldoxime. The chain is Hexahomomethionine N-hydroxylase (CYP79F2) from Arabidopsis thaliana (Mouse-ear cress).